The sequence spans 409 residues: uncharacterized protein (409 aa).

Positions 36 to 50 are enriched in basic and acidic residues; sequence HLKAKARAQESDSDR. Disordered stretches follow at residues 36–67, 239–298, and 338–373; these read HLKAKARAQESDSDRPCSSIESSSEPASTFSS, IENT…SSTI, and RSQIKGKDSEGRRKIQRRHKKPLAEEEADPTLTGPR. Residues 51–67 show a composition bias toward low complexity; sequence PCSSIESSSEPASTFSS. Residues 245 to 265 are compositionally biased toward basic and acidic residues; it reads VREESNQEHPPGKQEKTEKHP. The span at 268-281 shows a compositional bias: polar residues; it reads LQGSHQAEPETSSK. 2 stretches are compositionally biased toward basic and acidic residues: residues 282–294 and 338–350; these read NSEEYEKSLKMDD and RSQIKGKDSEGRR.

This is an uncharacterized protein from Homo sapiens (Human).